Consider the following 348-residue polypeptide: Protein RecA (348 aa).

An ATP-binding site is contributed by 65 to 72 (GPESSGKT).

This sequence belongs to the RecA family.

It is found in the cytoplasm. Its function is as follows. Can catalyze the hydrolysis of ATP in the presence of single-stranded DNA, the ATP-dependent uptake of single-stranded DNA by duplex DNA, and the ATP-dependent hybridization of homologous single-stranded DNAs. It interacts with LexA causing its activation and leading to its autocatalytic cleavage. The polypeptide is Protein RecA (Vibrio anguillarum (Listonella anguillarum)).